The sequence spans 87 residues: Conotoxin QcMNCL-XIII0.1 (87 aa).

An N-terminal signal peptide occupies residues 1 to 18 (MNCLQLLLVLLLISTIAA). Positions 19–34 (LHGDGRVPQRRGRNIR) are excised as a propeptide.

Post-translationally, contains 4 disulfide bonds. Expressed by the venom duct.

The protein resides in the secreted. May interact and inhibit Cav3.1/CACNA1G calcium channels. In a ex vivo model, shows ability to block nerve signal transduction. This is Conotoxin QcMNCL-XIII0.1 from Conus quercinus (Oak cone).